Reading from the N-terminus, the 117-residue chain is Large ribosomal subunit protein uL18 (117 aa).

This sequence belongs to the universal ribosomal protein uL18 family. In terms of assembly, part of the 50S ribosomal subunit; part of the 5S rRNA/L5/L18/L25 subcomplex. Contacts the 5S and 23S rRNAs.

Its function is as follows. This is one of the proteins that bind and probably mediate the attachment of the 5S RNA into the large ribosomal subunit, where it forms part of the central protuberance. This Coxiella burnetii (strain CbuK_Q154) (Coxiella burnetii (strain Q154)) protein is Large ribosomal subunit protein uL18.